The primary structure comprises 258 residues: Malonyl-[acyl-carrier protein] O-methyltransferase (258 aa).

The protein belongs to the methyltransferase superfamily.

It carries out the reaction malonyl-[ACP] + S-adenosyl-L-methionine = malonyl-[ACP] methyl ester + S-adenosyl-L-homocysteine. The protein operates within cofactor biosynthesis; biotin biosynthesis. Converts the free carboxyl group of a malonyl-thioester to its methyl ester by transfer of a methyl group from S-adenosyl-L-methionine (SAM). It allows to synthesize pimeloyl-ACP via the fatty acid synthetic pathway. The polypeptide is Malonyl-[acyl-carrier protein] O-methyltransferase (Hamiltonella defensa subsp. Acyrthosiphon pisum (strain 5AT)).